We begin with the raw amino-acid sequence, 205 residues long: Glycerol-3-phosphate acyltransferase (205 aa).

A run of 4 helical transmembrane segments spans residues 4–24 (IAPGMILLAYLCGSISSAILV), 80–100 (PFWLGLIAIAACLGHIWPIFF), 112–132 (FGAIAPIGWDLTGVMAGTWLL), and 138–158 (GYSSLGAIVSALVAPFYVWWF).

This sequence belongs to the PlsY family. In terms of assembly, probably interacts with PlsX.

It localises to the cell inner membrane. The enzyme catalyses an acyl phosphate + sn-glycerol 3-phosphate = a 1-acyl-sn-glycero-3-phosphate + phosphate. It participates in lipid metabolism; phospholipid metabolism. In terms of biological role, catalyzes the transfer of an acyl group from acyl-phosphate (acyl-PO(4)) to glycerol-3-phosphate (G3P) to form lysophosphatidic acid (LPA). This enzyme utilizes acyl-phosphate as fatty acyl donor, but not acyl-CoA or acyl-ACP. The chain is Glycerol-3-phosphate acyltransferase from Cronobacter sakazakii (strain ATCC BAA-894) (Enterobacter sakazakii).